The chain runs to 238 residues: tRNA1(Val) (adenine(37)-N6)-methyltransferase (238 aa).

The protein belongs to the methyltransferase superfamily. tRNA (adenine-N(6)-)-methyltransferase family.

It is found in the cytoplasm. The enzyme catalyses adenosine(37) in tRNA1(Val) + S-adenosyl-L-methionine = N(6)-methyladenosine(37) in tRNA1(Val) + S-adenosyl-L-homocysteine + H(+). Functionally, specifically methylates the adenine in position 37 of tRNA(1)(Val) (anticodon cmo5UAC). The chain is tRNA1(Val) (adenine(37)-N6)-methyltransferase from Shewanella putrefaciens (strain CN-32 / ATCC BAA-453).